The following is a 518-amino-acid chain: MECDLMETDILESLEDLGYKGPLLEDGALSQAVSAGASSPEFTKLCAWLVSELRVLCKLEENVQATNSPSEAEEFQLEVSGLLGEMNCPYLSLTSGDVTKRLLIQKNCLLLLTYLISELEAARMLCVNAPPKKAQEGGGSEVFQELEGICIALGMSKPPANITMFQFFSGIEKKLKETLAKVPPNHVGKPLLKKPMGPAHWEKIEAINQAIANEYEVRRKLLIKRLDVTVQSFGWSDRAKSQTEKLAKVYQPKRSVLSPKSTISVAHLLAARQDLSKILRTSSGSIGEKTACAINKVLMGRVPDRGGRPNEIEPPPPEMPPWQKRQDGPQQQTGGRGGGRGGYEHSSYGGRGGHEQGGGRGGRGGYDHGGRGGGRGNKHQGGWTDGGSGGGGGYQDGGYRDSGFQPGGYHGGHSSGGYQGGGYGGFQTSSSYTGSGYQGGGYQQDNRYQDGGHHGDRGGGRGGRGGRGGRGGRAGQGGGWGGRGSQNYHQGGQFEQHFQHGGYQYNHSGFGQGRHYTS.

Disordered stretches follow at residues 300 to 415 and 434 to 518; these read GRVP…GHSS and GSGY…HYTS. Residues 302 to 311 are compositionally biased toward basic and acidic residues; sequence VPDRGGRPNE. Gly residues-rich tracts occupy residues 349–364, 383–396, and 405–415; these read GGRG…GGRG, WTDG…GYQD, and QPGGYHGGHSS. Over residues 447–459 the composition is skewed to basic and acidic residues; sequence RYQDGGHHGDRGG. Over residues 460–484 the composition is skewed to gly residues; it reads GRGGRGGRGGRGGRAGQGGGWGGRG. The segment covering 488–504 has biased composition (low complexity); that stretch reads YHQGGQFEQHFQHGGYQ. Residues 505 to 518 show a composition bias toward polar residues; that stretch reads YNHSGFGQGRHYTS.

It belongs to the FAM98 family. As to quaternary structure, interacts (via N- and C-terminus) with DDX1. Interacts (via N- and C-terminus) with C14orf166. Interacts with FAM98B. Interacts with PLEKHM1 (via N- and C-terminus).

Functionally, positively stimulates PRMT1-induced protein arginine methylation. Involved in skeletal homeostasis. Positively regulates lysosome peripheral distribution and ruffled border formation in osteoclasts. The sequence is that of Protein FAM98A from Pongo abelii (Sumatran orangutan).